The sequence spans 147 residues: MVHFTAEEKAAVTSLWSKMNVEEAGGEALGRLLIVYPWTQRFFDSFGNLSSPSAILGNPKVKAHGKKVLTSFGDAIKNMDNLKPAFAKLSELHCDKLHVDPENFKLLGNVMVIILATHFGKEFTPEVQAAWQKLVSAVAIALAHKYH.

In terms of domain architecture, Globin spans 3–147 (HFTAEEKAAV…VAIALAHKYH (145 aa)). Ser-14 and Ser-51 each carry phosphoserine. Heme b is bound by residues His-64 and His-93.

Belongs to the globin family. As to quaternary structure, heterotetramer of two alpha chains and two epsilon chains in early embryonic hemoglobin Gower-2; two zeta chains and two epsilon chains in early embryonic hemoglobin Gower-1. Red blood cells.

In terms of biological role, the epsilon chain is a beta-type chain of early mammalian embryonic hemoglobin. The sequence is that of Hemoglobin subunit epsilon (HBE1) from Pan paniscus (Pygmy chimpanzee).